Reading from the N-terminus, the 172-residue chain is Large ribosomal subunit protein uL10 (172 aa).

The protein belongs to the universal ribosomal protein uL10 family. As to quaternary structure, part of the ribosomal stalk of the 50S ribosomal subunit. The N-terminus interacts with L11 and the large rRNA to form the base of the stalk. The C-terminus forms an elongated spine to which L12 dimers bind in a sequential fashion forming a multimeric L10(L12)X complex.

In terms of biological role, forms part of the ribosomal stalk, playing a central role in the interaction of the ribosome with GTP-bound translation factors. This is Large ribosomal subunit protein uL10 from Francisella philomiragia subsp. philomiragia (strain ATCC 25017 / CCUG 19701 / FSC 153 / O#319-036).